The primary structure comprises 3119 residues: Huntingtin (3119 aa).

The disordered stretch occupies residues methionine 1–histidine 65. Lysine 9 carries the N6-acetyllysine modification. Residues glutamine 24–alanine 60 show a composition bias toward pro residues. N6-acetyllysine is present on residues lysine 155 and lysine 213. HEAT repeat units lie at residues proline 183 to asparagine 220 and asparagine 225 to arginine 262. Lysine 322 carries the post-translational modification N6-acetyllysine. Residues serine 396, serine 398, and serine 411 each carry the phosphoserine modification. N6-acetyllysine is present on lysine 421. Residues glycine 470–glutamine 481 are interaction with ZDHHC17. A disordered region spans residues aspartate 495–serine 558. Positions aspartate 529 to serine 558 are enriched in polar residues. Glycine 530 is lipidated: N-myristoyl glycine. Residues serine 620 and serine 623 each carry the phosphoserine modification. HEAT repeat units follow at residues phenylalanine 782 to serine 819 and lysine 882 to tyrosine 920. Residues lysine 1146 to serine 1204 form a disordered region. Residues leucine 1149–proline 1160 are compositionally biased toward low complexity. 2 positions are modified to phosphoserine; by CDK5: serine 1159 and serine 1179. The segment covering alanine 1189–serine 1204 has biased composition (polar residues). One copy of the HEAT 5 repeat lies at leucine 1404–asparagine 1441. Serine 1853 bears the Phosphoserine mark. The Nuclear export signal motif lies at isoleucine 2372 to leucine 2381. The interval glutamate 2610 to arginine 2637 is disordered. Positions glutamate 2611 to aspartate 2622 are enriched in acidic residues.

The protein belongs to the huntingtin family. As to quaternary structure, interacts with PFN1. Interacts through its N-terminus with PRPF40A. Interacts with PQBP1. Interacts with SETD2. Interacts with SH3GLB1. Interacts with SYVN. Interacts with TPR; the interaction is inhibited by forms of Huntingtin with expanded polyglutamine stretch. Interacts with ZDHHC13 (via ANK repeats). Interacts with ZDHHC17 (via ANK repeats). Interacts with F8A1/F8A2/F8A3. Found in a complex with F8A1/F8A2/F8A3, HTT and RAB5A; mediates the recruitment of HTT by RAB5A. Post-translationally, phosphorylation at Ser-1159 and Ser-1179 by CDK5 in response to DNA damage in nuclei of neurons protects neurons against polyglutamine expansion as well as DNA damage mediated toxicity. Cleaved by caspases downstream of the polyglutamine stretch. In terms of processing, myristoylated at Gly-530, following proteolytic cleavage at Asp-529. In terms of tissue distribution, the highest level is seen throughout the brain, but it is also found in the stomach, heart, testis, adipose tissue, muscle, spleen, liver, and kidney.

It localises to the cytoplasm. The protein localises to the nucleus. The protein resides in the cytoplasmic vesicle. It is found in the autophagosome. Its function is as follows. May play a role in microtubule-mediated transport or vesicle function. Promotes the formation of autophagic vesicles. The sequence is that of Huntingtin (Htt) from Mus musculus (Mouse).